The chain runs to 302 residues: Bifunctional protein FolD (302 aa).

Residues 165–167 (GRS), S190, and I231 contribute to the NADP(+) site.

The protein belongs to the tetrahydrofolate dehydrogenase/cyclohydrolase family. In terms of assembly, homodimer.

It carries out the reaction (6R)-5,10-methylene-5,6,7,8-tetrahydrofolate + NADP(+) = (6R)-5,10-methenyltetrahydrofolate + NADPH. The catalysed reaction is (6R)-5,10-methenyltetrahydrofolate + H2O = (6R)-10-formyltetrahydrofolate + H(+). The protein operates within one-carbon metabolism; tetrahydrofolate interconversion. Catalyzes the oxidation of 5,10-methylenetetrahydrofolate to 5,10-methenyltetrahydrofolate and then the hydrolysis of 5,10-methenyltetrahydrofolate to 10-formyltetrahydrofolate. In Prochlorococcus marinus (strain SARG / CCMP1375 / SS120), this protein is Bifunctional protein FolD.